A 242-amino-acid polypeptide reads, in one-letter code: MSKRRIAPLTFLRRLLLRILAALAVFWGGGIALFSVVPVPFSAVMAERQISAWLSGEFGYVAHSDWVSMADISPWMGLAVIAAEDQKFPEHWGFDVPAIEKALAHNERNESRIRGASTLSQQTAKNLFLWDGRSWVRKGLEAGLTLGIETVWSKKRILTVYLNIAEFGDGIFGVEAAAQRYFHKPASRLSVSEAALLAAVLPNPLRYKANAPSGYVRSRQAWIMRQMRQLGGESFMTRNQLN.

A helical transmembrane segment spans residues 19 to 39 (ILAALAVFWGGGIALFSVVPV).

It belongs to the glycosyltransferase 51 family.

The protein resides in the cell inner membrane. The catalysed reaction is [GlcNAc-(1-&gt;4)-Mur2Ac(oyl-L-Ala-gamma-D-Glu-L-Lys-D-Ala-D-Ala)](n)-di-trans,octa-cis-undecaprenyl diphosphate + beta-D-GlcNAc-(1-&gt;4)-Mur2Ac(oyl-L-Ala-gamma-D-Glu-L-Lys-D-Ala-D-Ala)-di-trans,octa-cis-undecaprenyl diphosphate = [GlcNAc-(1-&gt;4)-Mur2Ac(oyl-L-Ala-gamma-D-Glu-L-Lys-D-Ala-D-Ala)](n+1)-di-trans,octa-cis-undecaprenyl diphosphate + di-trans,octa-cis-undecaprenyl diphosphate + H(+). The protein operates within cell wall biogenesis; peptidoglycan biosynthesis. Functionally, peptidoglycan polymerase that catalyzes glycan chain elongation from lipid-linked precursors. The protein is Biosynthetic peptidoglycan transglycosylase of Salmonella paratyphi B (strain ATCC BAA-1250 / SPB7).